A 33-amino-acid chain; its full sequence is MDAPAIAAAKTAADALAAAKKTAADAAAAAAKP.

Methionine 1 is subject to Blocked amino end (Met).

It belongs to the type-I AFP family.

Antifreeze proteins lower the blood freezing point. In Myoxocephalus aenaeus (Grubby sculpin), this protein is Ice-structuring protein GS-5.